The primary structure comprises 272 residues: Small ribosomal subunit protein uS2 (272 aa).

Positions 251–272 are disordered; the sequence is LLTEGAPAAEAPAEAEGETKAE. The segment covering 253 to 264 has biased composition (low complexity); the sequence is TEGAPAAEAPAE.

The protein belongs to the universal ribosomal protein uS2 family.

The sequence is that of Small ribosomal subunit protein uS2 from Bifidobacterium adolescentis (strain ATCC 15703 / DSM 20083 / NCTC 11814 / E194a).